The sequence spans 204 residues: Inner membrane protein YagU (204 aa).

Residues 1–14 (MNIFEQTPPNRRRY) are Periplasmic-facing. The chain crosses the membrane as a helical span at residues 15 to 35 (GLAAFIGLIAGVVSAFVKWGA). The Cytoplasmic segment spans residues 36–100 (EVPLPPRSPV…VYTFAGHVFN (65 aa)). A helical membrane pass occupies residues 101–121 (WVGVTHIIFSIVFAVGYCVVA). Residues 122–132 (EVFPKIKLWQG) are Periplasmic-facing. A helical transmembrane segment spans residues 133–153 (LLAGALAQLFVHMISFPLMGL). Residues 154–204 (TPPLFDLPWYENVSEIFGHLVWFWSIEIIRRDLRNRITHEPDPEIPLGSNR) are Cytoplasmic-facing.

As to quaternary structure, homodimer.

The protein resides in the cell inner membrane. The protein is Inner membrane protein YagU (yagU) of Escherichia coli (strain K12).